Here is a 597-residue protein sequence, read N- to C-terminus: Tubulin polyglutamylase ttll-4 (597 aa).

Residues 1 to 18 are compositionally biased toward polar residues; that stretch reads MSSGYSSAPSVSHTSSEA. 2 disordered regions span residues 1-39 and 80-107; these read MSSGYSSAPSVSHTSSEADLNRIESYEDGVDEEASDEQR and SKSKKKKQCPPNITIEKKNGNSSPFLKS. A compositionally biased stretch (acidic residues) spans 26-35; it reads YEDGVDEEAS. The TTL domain maps to 134 to 472; that stretch reads QSRLTWCHNS…HVPPSFDKLH (339 aa). ATP contacts are provided by residues Lys250, 256–257, 278–281, and 291–293; these read RG, QHYI, and KFD. Position 256 (Arg256) interacts with a protein. Position 317 (Arg317) interacts with L-glutamate. 338–339 is a binding site for ATP; that stretch reads TN. L-glutamate contacts are provided by Tyr340, Ser341, and Lys358. Residues Asp418, Glu431, and Asn433 each coordinate Mg(2+). Position 449 (Lys449) interacts with L-glutamate.

It belongs to the tubulin--tyrosine ligase family. It depends on Mg(2+) as a cofactor.

It carries out the reaction L-glutamyl-[protein] + L-glutamate + ATP = gamma-L-glutamyl-L-glutamyl-[protein] + ADP + phosphate + H(+). Monoglutamylase which modifies tubulin, adding a single glutamate on the gamma-carboxyl group of specific glutamate residues of target proteins. Involved in the side-chain initiation step of the polyglutamylation reaction but not in the elongation step. Preferentially modifies beta-tail tubulin over the alpha-tubulin. Involved in side-chain glutamylation of tubulin in sensory cilia. Together with ttll-5 and ttll-11, required for male mating. The chain is Tubulin polyglutamylase ttll-4 (ttll-4) from Caenorhabditis briggsae.